We begin with the raw amino-acid sequence, 195 residues long: Probable serine/threonine-protein kinase BUD32 homolog (195 aa).

In terms of domain architecture, Protein kinase spans 1–195; that stretch reads MKVYLGGEAE…GRYVERVSMG (195 aa). Residue K12 coordinates ATP. The active-site Proton acceptor is the D107.

It belongs to the protein kinase superfamily. Tyr protein kinase family. BUD32 subfamily.

The protein resides in the cytoplasm. The catalysed reaction is L-seryl-[protein] + ATP = O-phospho-L-seryl-[protein] + ADP + H(+). The enzyme catalyses L-threonyl-[protein] + ATP = O-phospho-L-threonyl-[protein] + ADP + H(+). In terms of biological role, could be involved in the formation of a threonylcarbamoyl group on adenosine at position 37 (t(6)A37) in tRNAs that read codons beginning with adenine. The sequence is that of Probable serine/threonine-protein kinase BUD32 homolog from Archaeoglobus fulgidus (strain ATCC 49558 / DSM 4304 / JCM 9628 / NBRC 100126 / VC-16).